Here is a 378-residue protein sequence, read N- to C-terminus: tRNA-specific 2-thiouridylase MnmA (378 aa).

Residues 9–16 and Met-35 each bind ATP; that span reads GVSGGVDS. Positions 94–96 are interaction with target base in tRNA; sequence NPD. Cys-99 serves as the catalytic Nucleophile. Cys-99 and Cys-195 form a disulfide bridge. Gly-123 lines the ATP pocket. An interaction with tRNA region spans residues 145-147; sequence KDQ. The active-site Cysteine persulfide intermediate is the Cys-195. Residues 307–308 form an interaction with tRNA region; sequence RY.

The protein belongs to the MnmA/TRMU family.

It localises to the cytoplasm. The enzyme catalyses S-sulfanyl-L-cysteinyl-[protein] + uridine(34) in tRNA + AH2 + ATP = 2-thiouridine(34) in tRNA + L-cysteinyl-[protein] + A + AMP + diphosphate + H(+). Its function is as follows. Catalyzes the 2-thiolation of uridine at the wobble position (U34) of tRNA, leading to the formation of s(2)U34. The polypeptide is tRNA-specific 2-thiouridylase MnmA (Xanthomonas oryzae pv. oryzae (strain MAFF 311018)).